The chain runs to 248 residues: Triosephosphate isomerase (248 aa).

Substrate is bound by residues asparagine 10 and lysine 12. The Electrophile role is filled by histidine 95. Glutamate 165 functions as the Proton acceptor in the catalytic mechanism.

It belongs to the triosephosphate isomerase family. In terms of assembly, homodimer.

It catalyses the reaction D-glyceraldehyde 3-phosphate = dihydroxyacetone phosphate. It functions in the pathway carbohydrate biosynthesis; gluconeogenesis. The protein operates within carbohydrate degradation; glycolysis; D-glyceraldehyde 3-phosphate from glycerone phosphate: step 1/1. The chain is Triosephosphate isomerase (TPI1) from Kluyveromyces marxianus (Yeast).